Reading from the N-terminus, the 67-residue chain is V-type proton ATPase subunit e (67 aa).

Topologically, residues 1 to 2 (MG) are lumenal. The chain crosses the membrane as a helical span at residues 3 to 23 (GLVVLLVGLLTALMSVVSYYV). Topologically, residues 24-35 (SPKGNNTSTWQM) are cytoplasmic. Residues 36 to 56 (SLILTFSCCYLLWAITYLAQL) form a helical membrane-spanning segment. At 57–67 (HPLEAPSRVLE) the chain is on the lumenal side.

It belongs to the V-ATPase e1/e2 subunit family. V-ATPase is a heteromultimeric enzyme composed of a peripheral catalytic V1 complex (components A to H) attached to an integral membrane V0 proton pore complex (components: a, c, c', c'', d, e, f and VOA1).

It localises to the vacuole membrane. Subunit of the V0 complex of vacuolar(H+)-ATPase (V-ATPase), a multisubunit enzyme composed of a peripheral complex (V1) that hydrolyzes ATP and a membrane integral complex (V0) that translocates protons. V-ATPase is responsible for acidifying and maintaining the pH of intracellular compartments. In Schizosaccharomyces pombe (strain 972 / ATCC 24843) (Fission yeast), this protein is V-type proton ATPase subunit e (vma9).